The chain runs to 433 residues: GTPase Der (433 aa).

EngA-type G domains lie at 3-167 (NRVV…KEEK) and 175-347 (IKVA…KDYT). GTP contacts are provided by residues 9–16 (GRPNVGKS), 56–60 (DTGGL), 119–122 (NKID), 181–188 (GRPNVGKS), 228–232 (DTAGV), and 293–296 (NKMD). In terms of domain architecture, KH-like spans 348–432 (KQHKTSFVNR…PIKLVIKGRE (85 aa)).

The protein belongs to the TRAFAC class TrmE-Era-EngA-EngB-Septin-like GTPase superfamily. EngA (Der) GTPase family. Associates with the 50S ribosomal subunit.

Its function is as follows. GTPase that plays an essential role in the late steps of ribosome biogenesis. The sequence is that of GTPase Der from Aquifex aeolicus (strain VF5).